Reading from the N-terminus, the 228-residue chain is MADS-box transcription factor 22 (228 aa).

An MADS-box domain is found at 1 to 61; it reads MARERREIKR…GKLSHFASSS (61 aa). Positions 86–176 constitute a K-box domain; it reads LNLEHSKYAH…RNQVSQISPA (91 aa). The disordered stretch occupies residues 189–217; that stretch reads EGQSSESVMTALHSGSSQSQDNDDGSDVS.

In terms of tissue distribution, expressed in palea and stamen primordia. Expressed in shoots and coleoptiles.

The protein localises to the nucleus. In terms of biological role, probable transcription factor. May be required for spikelet (rice flower) development. Transcription factor that functions to support the MADS55 in its function as negative regulator of brassinosteroid signaling. In Oryza sativa subsp. japonica (Rice), this protein is MADS-box transcription factor 22 (MADS22).